Reading from the N-terminus, the 378-residue chain is Putative odorant receptor 71a (378 aa).

At 1–37 the chain is on the cytoplasmic side; the sequence is MDYDRIRPVRFLTGVLKWWRLWPRKESVSTPDWTNWQ. Residues 38–58 traverse the membrane as a helical segment; that stretch reads AYALHVPFTFLFVLLLWLEAI. Topologically, residues 59–66 are extracellular; that stretch reads KSRDIQHT. Residues 67–87 form a helical membrane-spanning segment; the sequence is ADVLLICLTTTALGGKVINIW. The Cytoplasmic segment spans residues 88–127; the sequence is KYAHVAQGILSEWSTWDLFELRSKQEVDMWRFEHRRFNRV. A helical membrane pass occupies residues 128 to 148; sequence FMFYCLCSAGVIPFIVIQPLF. Residues 149–166 lie on the Extracellular side of the membrane; it reads DIPNRLPFWMWTPFDWQQ. A helical membrane pass occupies residues 167–187; that stretch reads PVLFWYAFIYQATTIPIACAC. Residues 188-255 lie on the Cytoplasmic side of the membrane; the sequence is NVTMDAVNWY…IFISKSTFTQ (68 aa). A helical transmembrane segment spans residues 256 to 276; it reads ILVSSLIICFTIYSMQMSPVL. At 277–280 the chain is on the extracellular side; sequence QDLP. Residues 281–301 form a helical membrane-spanning segment; the sequence is GFAAMMQYLVAMIMQVMLPTI. At 302–343 the chain is on the cytoplasmic side; sequence YGNAVIDSANMLTDSMYNSDWPDMNCRMRRLVLMFMVYLNRP. The helical transmembrane segment at 344–364 threads the bilayer; it reads VTLKAGGFFHIGLPLFTKTMN. The Extracellular portion of the chain corresponds to 365-378; the sequence is QAYSLLALLLNMNQ.

The protein belongs to the insect chemoreceptor superfamily. Heteromeric odorant receptor channel (TC 1.A.69) family. Or2a subfamily. As to quaternary structure, interacts with Orco. Complexes exist early in the endomembrane system in olfactory sensory neurons (OSNs), coupling these complexes to the conserved ciliary trafficking pathway. As to expression, expressed in olfactory sensory neurons in the maxillary palp.

Its subcellular location is the cell membrane. Odorant receptor which mediates acceptance or avoidance behavior, depending on its substrates. The odorant receptor repertoire encodes a large collection of odor stimuli that vary widely in identity, intensity, and duration. May form a complex with Orco to form odorant-sensing units, providing sensitive and prolonged odorant signaling and calcium permeability. This chain is Putative odorant receptor 71a (Or71a), found in Drosophila melanogaster (Fruit fly).